A 426-amino-acid polypeptide reads, in one-letter code: Arrestin domain-containing protein 17 (426 aa).

The segment covering 320-329 (QSAGNGSLPK) has biased composition (polar residues). Residues 320 to 340 (QSAGNGSLPKSSIKDSPPKWD) are disordered. Over residues 331–340 (SIKDSPPKWD) the composition is skewed to basic and acidic residues.

Belongs to the arrestin family. Interacts with tax-6. In terms of processing, phosphorylated. Dephosphorylated by tax-6 in vitro. In terms of tissue distribution, expressed from the comma stage to adulthood in the nervous system, including sensory neurons and interneurons posterior to the nerve ring, dorsal and ventral nerve cords, tail ganglia and, CEP, HSN, ASK, ADL, ASH and ASJ neurons.

Involved in several behavioral responses including chemotaxis towards lysine and adaptation to repeated osmotic stress. In addition, plays a role in resuming egg-laying and locomotion after starvation. In Caenorhabditis elegans, this protein is Arrestin domain-containing protein 17.